Consider the following 192-residue polypeptide: Small ribosomal subunit protein uS5 (192 aa).

An S5 DRBM domain is found at 20-83; sequence FVDKLVHINR…EAAKRGLIRV (64 aa). The disordered stretch occupies residues 162–192; that stretch reads SVAARRGLKVSALQARRRDADPADTSDAAVA.

Belongs to the universal ribosomal protein uS5 family. In terms of assembly, part of the 30S ribosomal subunit. Contacts proteins S4 and S8.

In terms of biological role, with S4 and S12 plays an important role in translational accuracy. Located at the back of the 30S subunit body where it stabilizes the conformation of the head with respect to the body. The polypeptide is Small ribosomal subunit protein uS5 (Methylorubrum populi (strain ATCC BAA-705 / NCIMB 13946 / BJ001) (Methylobacterium populi)).